The sequence spans 1065 residues: Exportin-T (1065 aa).

It belongs to the exportin family.

The protein localises to the nucleus. The protein resides in the cytoplasm. Its function is as follows. tRNA nucleus export receptor which facilitates tRNA translocation across the nuclear pore complex. Involved in pre-tRNA splicing, probably by affecting the interaction of pre-tRNA with splicing endonuclease. This is Exportin-T (LOS1) from Coprinopsis cinerea (strain Okayama-7 / 130 / ATCC MYA-4618 / FGSC 9003) (Inky cap fungus).